Consider the following 415-residue polypeptide: Serine hydroxymethyltransferase (415 aa).

(6S)-5,6,7,8-tetrahydrofolate-binding positions include Leu120 and 124 to 126; that span reads GHL. Position 229 is an N6-(pyridoxal phosphate)lysine (Lys229).

It belongs to the SHMT family. Homodimer. Pyridoxal 5'-phosphate is required as a cofactor.

It is found in the cytoplasm. The enzyme catalyses (6R)-5,10-methylene-5,6,7,8-tetrahydrofolate + glycine + H2O = (6S)-5,6,7,8-tetrahydrofolate + L-serine. The protein operates within one-carbon metabolism; tetrahydrofolate interconversion. It functions in the pathway amino-acid biosynthesis; glycine biosynthesis; glycine from L-serine: step 1/1. In terms of biological role, catalyzes the reversible interconversion of serine and glycine with tetrahydrofolate (THF) serving as the one-carbon carrier. This reaction serves as the major source of one-carbon groups required for the biosynthesis of purines, thymidylate, methionine, and other important biomolecules. Also exhibits THF-independent aldolase activity toward beta-hydroxyamino acids, producing glycine and aldehydes, via a retro-aldol mechanism. This is Serine hydroxymethyltransferase from Pelotomaculum thermopropionicum (strain DSM 13744 / JCM 10971 / SI).